The chain runs to 1040 residues: Probable starch synthase 4, chloroplastic/amyloplastic (1040 aa).

Residues 1–42 constitute a chloroplast transit peptide; it reads MTTKLSSFCFLTHGLAGISCEREHGSSRRFFYLPSRRLVSTS. Residues 43–142 are disordered; it reads CKMRQQRGFD…KSKTAKKKGE (100 aa). Composition is skewed to basic and acidic residues over residues 52–61 and 112–124; these read DSSKRQEVKK and NHADENLEKKDDI. A coiled-coil region spans residues 187 to 466; sequence ELMTMIRSAE…EESKKKSRDE (280 aa). ADP-binding residues include Lys-556, Gly-559, and Asp-562. (1,4-alpha-D-glucosyl)n is bound by residues Trp-679 and Gln-680. Residues Arg-849, Lys-854, Lys-906, Asp-908, Tyr-916, Leu-933, and Thr-934 each coordinate ADP.

Belongs to the glycosyltransferase 1 family. Bacterial/plant glycogen synthase subfamily. As to quaternary structure, interacts with PTST2. Interacts with PII1; the interaction is essential for the initiation of starch granules biosynthesis in leaf chloroplasts. As to expression, expressed in leaves and flowers.

It localises to the plastid. Its subcellular location is the chloroplast. It is found in the amyloplast. The protein resides in the chloroplast stroma. The enzyme catalyses [(1-&gt;4)-alpha-D-glucosyl](n) + ADP-alpha-D-glucose = [(1-&gt;4)-alpha-D-glucosyl](n+1) + ADP + H(+). It participates in glycan biosynthesis; starch biosynthesis. Functionally, probably involved in the priming of starch granule formation. May play a regulatory role in the control of starch accumulation in plastids. Is necessary and sufficient to establish the correct number of starch granules observed in chloroplasts. This chain is Probable starch synthase 4, chloroplastic/amyloplastic, found in Arabidopsis thaliana (Mouse-ear cress).